Reading from the N-terminus, the 479-residue chain is Aspartyl/glutamyl-tRNA(Asn/Gln) amidotransferase subunit B (479 aa).

Belongs to the GatB/GatE family. GatB subfamily. Heterotrimer of A, B and C subunits.

It carries out the reaction L-glutamyl-tRNA(Gln) + L-glutamine + ATP + H2O = L-glutaminyl-tRNA(Gln) + L-glutamate + ADP + phosphate + H(+). The catalysed reaction is L-aspartyl-tRNA(Asn) + L-glutamine + ATP + H2O = L-asparaginyl-tRNA(Asn) + L-glutamate + ADP + phosphate + 2 H(+). Functionally, allows the formation of correctly charged Asn-tRNA(Asn) or Gln-tRNA(Gln) through the transamidation of misacylated Asp-tRNA(Asn) or Glu-tRNA(Gln) in organisms which lack either or both of asparaginyl-tRNA or glutaminyl-tRNA synthetases. The reaction takes place in the presence of glutamine and ATP through an activated phospho-Asp-tRNA(Asn) or phospho-Glu-tRNA(Gln). This chain is Aspartyl/glutamyl-tRNA(Asn/Gln) amidotransferase subunit B, found in Streptococcus pyogenes serotype M5 (strain Manfredo).